We begin with the raw amino-acid sequence, 410 residues long: PHAF1 protein At3g51130 (410 aa).

Belongs to the PHAF1 family.

The sequence is that of PHAF1 protein At3g51130 from Arabidopsis thaliana (Mouse-ear cress).